The following is a 212-amino-acid chain: ATP phosphoribosyltransferase (212 aa).

The protein belongs to the ATP phosphoribosyltransferase family. Short subfamily. In terms of assembly, heteromultimer composed of HisG and HisZ subunits.

It is found in the cytoplasm. It carries out the reaction 1-(5-phospho-beta-D-ribosyl)-ATP + diphosphate = 5-phospho-alpha-D-ribose 1-diphosphate + ATP. It participates in amino-acid biosynthesis; L-histidine biosynthesis; L-histidine from 5-phospho-alpha-D-ribose 1-diphosphate: step 1/9. In terms of biological role, catalyzes the condensation of ATP and 5-phosphoribose 1-diphosphate to form N'-(5'-phosphoribosyl)-ATP (PR-ATP). Has a crucial role in the pathway because the rate of histidine biosynthesis seems to be controlled primarily by regulation of HisG enzymatic activity. The polypeptide is ATP phosphoribosyltransferase (Clostridium botulinum (strain ATCC 19397 / Type A)).